Here is a 372-residue protein sequence, read N- to C-terminus: Putative 26S proteasome regulatory subunit homolog MTH_1011 (372 aa).

Residue 164–171 (GSPGTGKT) participates in ATP binding.

It belongs to the AAA ATPase family.

Functionally, the 26S proteasome is involved in the ATP-dependent degradation of ubiquitinated proteins. The regulatory (or ATPase) complex confers ATP dependency and substrate specificity to the 26S complex. The polypeptide is Putative 26S proteasome regulatory subunit homolog MTH_1011 (Methanothermobacter thermautotrophicus (strain ATCC 29096 / DSM 1053 / JCM 10044 / NBRC 100330 / Delta H) (Methanobacterium thermoautotrophicum)).